The chain runs to 362 residues: Serine/threonine-protein kinase ZRK4 (362 aa).

The tract at residues 1–23 (MNDQKMSCWRKKSKKKNSEANQR) is disordered. Residues 35 to 362 (LEDLIELCNG…KELKRIERWT (328 aa)) enclose the Protein kinase domain. ATP-binding positions include 41–49 (LCNGKSNPI) and lysine 89. The active-site Proton acceptor is the aspartate 185.

Belongs to the protein kinase superfamily. Ser/Thr protein kinase family. ZRK subfamily.

The catalysed reaction is L-seryl-[protein] + ATP = O-phospho-L-seryl-[protein] + ADP + H(+). It catalyses the reaction L-threonyl-[protein] + ATP = O-phospho-L-threonyl-[protein] + ADP + H(+). The polypeptide is Serine/threonine-protein kinase ZRK4 (Arabidopsis thaliana (Mouse-ear cress)).